The chain runs to 537 residues: MGCVQCKDKEATKLTEERDGSLNQSSGYRYGTDPTPQHYPSFGVTSIPNYNNFHAAGGQGLTVFGGVNSSSHTGTLRTRGGTGVTLFVALYDYEARTEDDLSFHKGEKFQILNSSEGDWWEARSLTTGETGYIPSNYVAPVDSIQAEEWYFGKLGRKDAERQLLSFGNPRGTFLIRESETTKGAYSLSIRDWDDMKGDHVKHYKIRKLDNGGYYITTRAQFETLQQLVQHYSERAAGLCCRLVVPCHKGMPRLTDLSVKTKDVWEIPRESLQLIKRLGNGQFGEVWMGTWNGNTKVAIKTLKPGTMSPESFLEEAQIMKKLKHDKLVQLYAVVSEEPIYIVTEYMNKGSLLDFLKDGEGRALKLPNLVDMAAQVAAGMAYIERMNYIHRDLRSANILVGNGLICKIADFGLARLIEDNEYTARQGAKFPIKWTAPEAALYGRFTIKSDVWSFGILLTELVTKGRVPYPGMNNREVLEQVERGYRMPCPQDCPISLHELMIHCWKKDPEERPTFEYLQSFLEDYFTATEPQYQPGENL.

G2 carries the N-myristoyl glycine lipid modification. 2 S-palmitoyl cysteine lipidation sites follow: C3 and C6. Position 12 is a phosphothreonine; by PKC (T12). Positions 14 to 35 (LTEERDGSLNQSSGYRYGTDPT) are disordered. Residues S21 and S26 each carry the phosphoserine modification. The SH3 domain occupies 82-143 (TGVTLFVALY…PSNYVAPVDS (62 aa)). Residues 149–246 (WYFGKLGRKD…GLCCRLVVPC (98 aa)) form the SH2 domain. Position 185 is a phosphotyrosine (Y185). The Protein kinase domain maps to 271–524 (LQLIKRLGNG…YLQSFLEDYF (254 aa)). ATP-binding positions include 277–285 (LGNGQFGEV) and K299. The active-site Proton acceptor is D390. Position 420 is a phosphotyrosine; by autocatalysis (Y420). A Phosphotyrosine; by CSK modification is found at Y531.

The protein belongs to the protein kinase superfamily. Tyr protein kinase family. SRC subfamily. As to quaternary structure, interacts (via its SH3 domain) with PIK3R1 and PRMT8. Interacts with FYB1, PAG1, and SH2D1A. Interacts with CD79A (tyrosine-phosphorylated form); the interaction increases FYN activity. Interacts (via SH2 domain) with CSF1R (tyrosine phosphorylated). Interacts with TOM1L1 (phosphorylated form). Interacts with KDR (tyrosine phosphorylated). Interacts (via SH3 domain) with KLHL2 (via N-terminus). Interacts with SH2D1A and SLAMF1. Interacts with ITCH; the interaction phosphorylates ITCH and negatively regulates its activity. Interacts with FASLG. Interacts with RUNX3. Interacts with KIT. Interacts with EPHA8; possible downstream effector of EPHA8 in regulation of cell adhesion. Interacts with PTK2/FAK1; this interaction leads to PTK2/FAK1 phosphorylation and activation. Interacts with CAV1; this interaction couples integrins to the Ras-ERK pathway. Interacts with UNC119. Interacts (via SH2 domain) with PTPRH (phosphorylated form). Interacts with PTPRO (phosphorylated form). Interacts with PTPRB (phosphorylated form). Interacts with FYB2. Interacts with DSCAM. Interacts with SKAP1 and FYB1; this interaction promotes the phosphorylation of CLNK. Interacts with NEDD9; in the presence of PTK2. In terms of assembly, (Microbial infection) Interacts (via its SH3 domain) with hepatitis E virus/HEV protein ORF3. Mn(2+) is required as a cofactor. Post-translationally, autophosphorylated at Tyr-420. Phosphorylation on the C-terminal tail at Tyr-531 by CSK maintains the enzyme in an inactive state. PTPRC/CD45 dephosphorylates Tyr-531 leading to activation. Ultraviolet B (UVB) strongly increase phosphorylation at Thr-12 and kinase activity, and promotes translocation from the cytoplasm to the nucleus. Dephosphorylation at Tyr-420 by PTPN2 negatively regulates T-cell receptor signaling. Phosphorylated at tyrosine residues, which can be enhanced by NTN1. Palmitoylated. Palmitoylation at Cys-3 and Cys-6, probably by ZDHHC21, regulates subcellular location. Isoform 1 is highly expressed in the brain. Isoform 2 is expressed in cells of hemopoietic lineages, especially T-lymphocytes.

Its subcellular location is the cytoplasm. It localises to the nucleus. The protein localises to the cell membrane. The protein resides in the perikaryon. It carries out the reaction L-tyrosyl-[protein] + ATP = O-phospho-L-tyrosyl-[protein] + ADP + H(+). Its activity is regulated as follows. Inhibited by phosphorylation of Tyr-531 by leukocyte common antigen and activated by dephosphorylation of this site. Functionally, non-receptor tyrosine-protein kinase that plays a role in many biological processes including regulation of cell growth and survival, cell adhesion, integrin-mediated signaling, cytoskeletal remodeling, cell motility, immune response and axon guidance. Inactive FYN is phosphorylated on its C-terminal tail within the catalytic domain. Following activation by PKA, the protein subsequently associates with PTK2/FAK1, allowing PTK2/FAK1 phosphorylation, activation and targeting to focal adhesions. Involved in the regulation of cell adhesion and motility through phosphorylation of CTNNB1 (beta-catenin) and CTNND1 (delta-catenin). Regulates cytoskeletal remodeling by phosphorylating several proteins including the actin regulator WAS and the microtubule-associated proteins MAP2 and MAPT. Promotes cell survival by phosphorylating AGAP2/PIKE-A and preventing its apoptotic cleavage. Participates in signal transduction pathways that regulate the integrity of the glomerular slit diaphragm (an essential part of the glomerular filter of the kidney) by phosphorylating several slit diaphragm components including NPHS1, KIRREL1 and TRPC6. Plays a role in neural processes by phosphorylating DPYSL2, a multifunctional adapter protein within the central nervous system, ARHGAP32, a regulator for Rho family GTPases implicated in various neural functions, and SNCA, a small pre-synaptic protein. Involved in reelin signaling by mediating phosphorylation of DAB1 following reelin (RELN)-binding to its receptor. Participates in the downstream signaling pathways that lead to T-cell differentiation and proliferation following T-cell receptor (TCR) stimulation. Phosphorylates PTK2B/PYK2 in response to T-cell receptor activation. Also participates in negative feedback regulation of TCR signaling through phosphorylation of PAG1, thereby promoting interaction between PAG1 and CSK and recruitment of CSK to lipid rafts. CSK maintains LCK and FYN in an inactive form. Promotes CD28-induced phosphorylation of VAV1. In mast cells, phosphorylates CLNK after activation of immunoglobulin epsilon receptor signaling. Can also promote CD244-mediated NK cell activation. The sequence is that of Tyrosine-protein kinase Fyn (FYN) from Homo sapiens (Human).